The sequence spans 752 residues: THO complex subunit HPR1 (752 aa).

Ser-234 carries the phosphoserine modification. The disordered stretch occupies residues 648–752 (RKKRALEEEA…SNGSSTQDMK (105 aa)). The span at 692 to 702 (EISEENTKIKS) shows a compositional bias: basic and acidic residues. Over residues 720-752 (PQNTTAQLENPKTEDNNAATSNISNGSSTQDMK) the composition is skewed to polar residues.

Component of the THO complex, which is composed of HPR1, MFT1, THO2 and THP2. Together with SUB2, TEX1 and YRA1, THO forms the transcription/export (TREX) complex. THO associates with DNA and RNA in vitro.

It localises to the nucleus. Component the THO subcomplex of the TREX complex, which operates in coupling transcription elongation to mRNA export. The THO complex is recruited to transcribed genes and moves along the gene with the elongating polymerase during transcription. THO is important for stabilizing nascent RNA in the RNA polymerase II elongation complex by preventing formation of DNA:RNA hybrids behind the elongating polymerase. It functions in cotranscriptional formation of an export-competent messenger ribonucleoprotein particle (mRNP) by facilitating the loading of ATP-dependent RNA helicase SUB2 and the mRNA export factor YRA1 along the nascent mRNA. In Saccharomyces cerevisiae (strain ATCC 204508 / S288c) (Baker's yeast), this protein is THO complex subunit HPR1 (HPR1).